A 100-amino-acid polypeptide reads, in one-letter code: Urease subunit gamma (100 aa).

It belongs to the urease gamma subunit family. In terms of assembly, heterotrimer of UreA (gamma), UreB (beta) and UreC (alpha) subunits. Three heterotrimers associate to form the active enzyme.

Its subcellular location is the cytoplasm. The enzyme catalyses urea + 2 H2O + H(+) = hydrogencarbonate + 2 NH4(+). It participates in nitrogen metabolism; urea degradation; CO(2) and NH(3) from urea (urease route): step 1/1. The protein is Urease subunit gamma of Klebsiella pneumoniae.